We begin with the raw amino-acid sequence, 393 residues long: Erythronate-4-phosphate dehydrogenase (393 aa).

The substrate site is built by serine 57 and threonine 79. Aspartate 159 lines the NAD(+) pocket. Arginine 229 is a catalytic residue. An NAD(+)-binding site is contributed by aspartate 253. Residue glutamate 258 is part of the active site. The active-site Proton donor is histidine 275. NAD(+) is bound at residue glycine 278. A substrate-binding site is contributed by tyrosine 279.

This sequence belongs to the D-isomer specific 2-hydroxyacid dehydrogenase family. PdxB subfamily. Homodimer.

It is found in the cytoplasm. The enzyme catalyses 4-phospho-D-erythronate + NAD(+) = (R)-3-hydroxy-2-oxo-4-phosphooxybutanoate + NADH + H(+). It participates in cofactor biosynthesis; pyridoxine 5'-phosphate biosynthesis; pyridoxine 5'-phosphate from D-erythrose 4-phosphate: step 2/5. Its function is as follows. Catalyzes the oxidation of erythronate-4-phosphate to 3-hydroxy-2-oxo-4-phosphonooxybutanoate. The chain is Erythronate-4-phosphate dehydrogenase from Colwellia psychrerythraea (strain 34H / ATCC BAA-681) (Vibrio psychroerythus).